The sequence spans 348 residues: Arginine kinase Oct f 2 (348 aa).

Positions 1 to 83 (MAEELFKTLQ…LDAVIMDYHK (83 aa)) constitute a Phosphagen kinase N-terminal domain. Residue 56 to 60 (GVGIY) participates in substrate binding. The Phosphagen kinase C-terminal domain maps to 111-347 (MIVSTRVRVG…NEIIREETNS (237 aa)). ATP is bound by residues 114 to 118 (STRVR) and H177. Residue E217 coordinates substrate. R221 is a binding site for ATP. Position 263 (C263) interacts with substrate. Residues 272–276 (RASVH) and 300–305 (RGIHGE) each bind ATP. A substrate-binding site is contributed by E305.

This sequence belongs to the ATP:guanido phosphotransferase family. As to expression, muscle (at protein level).

The enzyme catalyses L-arginine + ATP = N(omega)-phospho-L-arginine + ADP + H(+). In terms of biological role, catalyzes the reversible transfer of high energy ATP gamma-phosphate group to L-arginine. The protein is Arginine kinase Oct f 2 of Amphioctopus fangsiao (Ocellated octopus).